The sequence spans 143 residues: Large ribosomal subunit protein uL15 (143 aa).

The tract at residues 1 to 54 (MELNSIKPADGAKHAARRVGRGIGSGLGKTAGRGHKGQKSRSGGYHKVGFEGGQ) is disordered. The segment covering 21–31 (RGIGSGLGKTA) has biased composition (gly residues).

It belongs to the universal ribosomal protein uL15 family. As to quaternary structure, part of the 50S ribosomal subunit.

Functionally, binds to the 23S rRNA. The sequence is that of Large ribosomal subunit protein uL15 from Acidovorax ebreus (strain TPSY) (Diaphorobacter sp. (strain TPSY)).